We begin with the raw amino-acid sequence, 175 residues long: Large ribosomal subunit protein uL10 (175 aa).

This sequence belongs to the universal ribosomal protein uL10 family. Part of the ribosomal stalk of the 50S ribosomal subunit. The N-terminus interacts with L11 and the large rRNA to form the base of the stalk. The C-terminus forms an elongated spine to which L12 dimers bind in a sequential fashion forming a multimeric L10(L12)X complex.

In terms of biological role, forms part of the ribosomal stalk, playing a central role in the interaction of the ribosome with GTP-bound translation factors. This is Large ribosomal subunit protein uL10 from Delftia acidovorans (strain DSM 14801 / SPH-1).